The chain runs to 122 residues: Crustacean hyperglycemic hormones 5 (122 aa).

The first 26 residues, 1–26 (MSLGLIASRLVAVALVVVVACSTTWA), serve as a signal peptide directing secretion. Intrachain disulfides connect Cys55–Cys91, Cys71–Cys87, and Cys74–Cys100. At Val120 the chain carries Valine amide.

The protein belongs to the arthropod CHH/MIH/GIH/VIH hormone family.

The protein localises to the secreted. Functionally, hormone found in the sinus gland of isopods and decapods which controls the blood sugar level. Has a secretagogue action over the amylase released from the midgut gland. May act as a stress hormone and may be involved in the control of molting and reproduction. The polypeptide is Crustacean hyperglycemic hormones 5 (CHH5) (Penaeus monodon (Giant tiger prawn)).